We begin with the raw amino-acid sequence, 277 residues long: Shikimate dehydrogenase (NADP(+)) (277 aa).

Shikimate is bound by residues 15–17 (SLS) and Thr-62. The active-site Proton acceptor is the Lys-66. The shikimate site is built by Asn-87 and Asp-102. NADP(+)-binding positions include 127–131 (GAGGA), 151–156 (NRTVDK), and Ile-219. A shikimate-binding site is contributed by Tyr-221. An NADP(+)-binding site is contributed by Gly-242.

It belongs to the shikimate dehydrogenase family. As to quaternary structure, homodimer.

The catalysed reaction is shikimate + NADP(+) = 3-dehydroshikimate + NADPH + H(+). Its pathway is metabolic intermediate biosynthesis; chorismate biosynthesis; chorismate from D-erythrose 4-phosphate and phosphoenolpyruvate: step 4/7. Functionally, involved in the biosynthesis of the chorismate, which leads to the biosynthesis of aromatic amino acids. Catalyzes the reversible NADPH linked reduction of 3-dehydroshikimate (DHSA) to yield shikimate (SA). The protein is Shikimate dehydrogenase (NADP(+)) of Bacillus cereus (strain 03BB102).